The primary structure comprises 363 residues: Cellular tumor antigen p53 (363 aa).

The tract at residues 1 to 29 (MEPSSETGMDPPLSQETFEDLWSLLPDPL) is transcription activation (acidic). A DNA-binding region spans residues 76–267 (DYAGKYGLQL…RTEEDNYTKK (192 aa)). Zn(2+)-binding residues include Cys150, His153, Cys213, and Cys217. The tract at residues 248-255 (RVCACPGR) is interaction with DNA. The interval 257–290 (RRTEEDNYTKKRGLKPSGKRELAHPPSSEPPLPK) is disordered. The short motif at 275–292 (KRELAHPPSSEPPLPKKR) is the Bipartite nuclear localization signal element. Positions 300 to 331 (EEIFTLRIKGRSRYEMIKKLNDALELQESLDQ) are oligomerization. The short motif at 314–325 (EMIKKLNDALEL) is the Nuclear export signal element. The interval 344-356 (EIKPKKGKKLLVK) is basic (repression of DNA-binding).

It belongs to the p53 family. Binds DNA as a homotetramer. Zn(2+) serves as cofactor. As to expression, ubiquitous.

It localises to the cytoplasm. The protein resides in the nucleus. Its function is as follows. Multifunctional transcription factor that induces cell cycle arrest, DNA repair or apoptosis upon binding to its target DNA sequence. Acts as a tumor suppressor in many tumor types; induces growth arrest or apoptosis depending on the physiological circumstances and cell type. Negatively regulates cell division by controlling expression of a set of genes required for this process. One of the activated genes is an inhibitor of cyclin-dependent kinases. Apoptosis induction seems to be mediated either by stimulation of BAX and FAS antigen expression, or by repression of Bcl-2 expression. The polypeptide is Cellular tumor antigen p53 (tp53) (Xenopus laevis (African clawed frog)).